We begin with the raw amino-acid sequence, 347 residues long: tRNA N6-adenosine threonylcarbamoyltransferase (347 aa).

Fe cation is bound by residues H111 and H115. Residues 134 to 138 (LISGG), D167, G180, and N277 each bind substrate. A Fe cation-binding site is contributed by D305.

The protein belongs to the KAE1 / TsaD family. It depends on Fe(2+) as a cofactor.

The protein resides in the cytoplasm. The enzyme catalyses L-threonylcarbamoyladenylate + adenosine(37) in tRNA = N(6)-L-threonylcarbamoyladenosine(37) in tRNA + AMP + H(+). Required for the formation of a threonylcarbamoyl group on adenosine at position 37 (t(6)A37) in tRNAs that read codons beginning with adenine. Is involved in the transfer of the threonylcarbamoyl moiety of threonylcarbamoyl-AMP (TC-AMP) to the N6 group of A37, together with TsaE and TsaB. TsaD likely plays a direct catalytic role in this reaction. This chain is tRNA N6-adenosine threonylcarbamoyltransferase, found in Actinobacillus pleuropneumoniae serotype 5b (strain L20).